The following is an 851-amino-acid chain: Periplasmic nitrate reductase (851 aa).

Residues 1–29 (MQSNRRDFLKAQALAASAAAAGIPIVVEA) constitute a signal peptide (tat-type signal). The 57-residue stretch at 44-100 (VRWDKAPCRFCGTGCAVMVGVQEGKVVATQGDPEAPVNRGLNCIKGYFLSKIMYGRD) folds into the 4Fe-4S Mo/W bis-MGD-type domain. [4Fe-4S] cluster-binding residues include Cys-51, Cys-54, Cys-58, and Cys-86. Mo-bis(molybdopterin guanine dinucleotide) is bound by residues Lys-88, Gln-155, Asn-180, Cys-184, 217 to 224 (WGSNMAEM), 248 to 252 (STYEH), and 267 to 269 (QTD). Residues 317–338 (DATSNGYPGADGKPKGNPNDST) are disordered. Residues Met-388, Gln-392, Asn-498, 524-525 (SD), Lys-547, Asp-574, and 741-750 (TGRVLEHWHT) each bind Mo-bis(molybdopterin guanine dinucleotide). Phe-817 contacts substrate. The Mo-bis(molybdopterin guanine dinucleotide) site is built by Asn-825 and Lys-842.

Belongs to the prokaryotic molybdopterin-containing oxidoreductase family. NasA/NapA/NarB subfamily. Component of the periplasmic nitrate reductase NapAB complex composed of NapA and NapB. It depends on [4Fe-4S] cluster as a cofactor. Mo-bis(molybdopterin guanine dinucleotide) is required as a cofactor. Post-translationally, predicted to be exported by the Tat system. The position of the signal peptide cleavage has not been experimentally proven.

The protein resides in the periplasm. It catalyses the reaction 2 Fe(II)-[cytochrome] + nitrate + 2 H(+) = 2 Fe(III)-[cytochrome] + nitrite + H2O. Catalytic subunit of the periplasmic nitrate reductase complex NapAB. Receives electrons from NapB and catalyzes the reduction of nitrate to nitrite. This chain is Periplasmic nitrate reductase, found in Leptothrix cholodnii (strain ATCC 51168 / LMG 8142 / SP-6) (Leptothrix discophora (strain SP-6)).